The sequence spans 176 residues: Inorganic pyrophosphatase (176 aa).

K30, R44, and Y56 together coordinate substrate. The Mg(2+) site is built by D66, D71, and D103. Y142 contacts substrate.

This sequence belongs to the PPase family. Homohexamer. Mg(2+) is required as a cofactor.

It is found in the cytoplasm. It catalyses the reaction diphosphate + H2O = 2 phosphate + H(+). Functionally, catalyzes the hydrolysis of inorganic pyrophosphate (PPi) forming two phosphate ions. This Brucella melitensis biotype 1 (strain ATCC 23456 / CCUG 17765 / NCTC 10094 / 16M) protein is Inorganic pyrophosphatase.